We begin with the raw amino-acid sequence, 333 residues long: UPF0324 membrane protein WS2204 (333 aa).

The next 9 membrane-spanning stretches (helical) occupy residues 4–26, 31–53, 59–81, 88–110, 125–147, 154–176, 218–240, 253–275, and 310–332; these read SIRP…FGLA, FLSL…APWY, IGII…LFGF, LLGV…FTLG, SMLI…ESLS, TAIA…PLVY, VIVK…FTIL, PWFA…PSWL, and ALAL…VKLL.

The protein belongs to the UPF0324 family.

It localises to the cell membrane. The protein is UPF0324 membrane protein WS2204 of Wolinella succinogenes (strain ATCC 29543 / DSM 1740 / CCUG 13145 / JCM 31913 / LMG 7466 / NCTC 11488 / FDC 602W) (Vibrio succinogenes).